The chain runs to 95 residues: Signal recognition particle 19 kDa protein (95 aa).

This sequence belongs to the SRP19 family. Part of the signal recognition particle protein translocation system, which is composed of SRP and FtsY. Archaeal SRP consists of a 7S RNA molecule of 300 nucleotides and two protein subunits: SRP54 and SRP19.

Its subcellular location is the cytoplasm. Its function is as follows. Involved in targeting and insertion of nascent membrane proteins into the cytoplasmic membrane. Binds directly to 7S RNA and mediates binding of the 54 kDa subunit of the SRP. The protein is Signal recognition particle 19 kDa protein of Pyrobaculum islandicum (strain DSM 4184 / JCM 9189 / GEO3).